Reading from the N-terminus, the 703-residue chain is Polyribonucleotide nucleotidyltransferase (703 aa).

Positions 485 and 491 each coordinate Mg(2+). One can recognise a KH domain in the interval 552-611; the sequence is PRIYTLKIDQDKIRDVIGKGGAMIRSITEASDTNIEIEDDGTIKIFATERAKADIAISKI. Residues 621–689 form the S1 motif domain; sequence GKTYEGKVTR…RQNRVRLSIK (69 aa).

This sequence belongs to the polyribonucleotide nucleotidyltransferase family. In terms of assembly, component of the RNA degradosome, which is a multiprotein complex involved in RNA processing and mRNA degradation. The cofactor is Mg(2+).

It is found in the cytoplasm. The enzyme catalyses RNA(n+1) + phosphate = RNA(n) + a ribonucleoside 5'-diphosphate. Its function is as follows. Involved in mRNA degradation. Catalyzes the phosphorolysis of single-stranded polyribonucleotides processively in the 3'- to 5'-direction. The protein is Polyribonucleotide nucleotidyltransferase of Pseudoalteromonas atlantica (strain T6c / ATCC BAA-1087).